We begin with the raw amino-acid sequence, 451 residues long: Epi-neemfruitin B 7-O-acetyltransferse L7AT (451 aa).

Residues His165 and Asp384 each act as proton acceptor in the active site.

It belongs to the plant acyltransferase family. Monomer. In terms of tissue distribution, mainly expressed in petioles and, to a lower extent, in roots.

It catalyses the reaction epi-neemfruitin B + acetyl-CoA = 7-acetyl-epi-neemfruitin B + CoA. Its pathway is secondary metabolite biosynthesis; terpenoid biosynthesis. Acetyltransferase involved in the biosynthesis of limonoids triterpene natural products such as azadirachtin, an antifeedant widely used as bioinsecticide, and possessing many medicinal applications including anti-tumoral, anti-malarial, anti-rheumatic, antibacterial, anti-inflammatory, anti-pyretic and diuretic effects. Catalyzes the formation of 7-acetyl-epi-neemfruitin B from epi-neemfruitin B. This is Epi-neemfruitin B 7-O-acetyltransferse L7AT from Melia azedarach (Chinaberry tree).